Here is a 117-residue protein sequence, read N- to C-terminus: Immunoglobulin kappa variable 1-12 (117 aa).

Residues 1–22 form the signal peptide; that stretch reads MDMRVPAQLLGLLLLWFPGSRC. Residues 23 to 45 are framework-1; it reads DIQMTQSPSSVSASVGDRVTITC. An Ig-like domain is found at 24 to 117; the sequence is IQMTQSPSSV…YYCQQANSFP (94 aa). Cys45 and Cys110 are disulfide-bonded. The tract at residues 46–56 is complementarity-determining-1; that stretch reads RASQGISSWLA. Residues 57–71 are framework-2; it reads WYQQKPGKAPKLLIY. The tract at residues 72-78 is complementarity-determining-2; that stretch reads AASSLQS. The interval 79 to 110 is framework-3; sequence GVPSRFSGSGSGTDFTLTISSLQPEDFATYYC. The complementarity-determining-3 stretch occupies residues 111 to 117; sequence QQANSFP.

Immunoglobulins are composed of two identical heavy chains and two identical light chains; disulfide-linked.

It is found in the secreted. The protein localises to the cell membrane. V region of the variable domain of immunoglobulin light chains that participates in the antigen recognition. Immunoglobulins, also known as antibodies, are membrane-bound or secreted glycoproteins produced by B lymphocytes. In the recognition phase of humoral immunity, the membrane-bound immunoglobulins serve as receptors which, upon binding of a specific antigen, trigger the clonal expansion and differentiation of B lymphocytes into immunoglobulins-secreting plasma cells. Secreted immunoglobulins mediate the effector phase of humoral immunity, which results in the elimination of bound antigens. The antigen binding site is formed by the variable domain of one heavy chain, together with that of its associated light chain. Thus, each immunoglobulin has two antigen binding sites with remarkable affinity for a particular antigen. The variable domains are assembled by a process called V-(D)-J rearrangement and can then be subjected to somatic hypermutations which, after exposure to antigen and selection, allow affinity maturation for a particular antigen. This chain is Immunoglobulin kappa variable 1-12, found in Homo sapiens (Human).